Reading from the N-terminus, the 470-residue chain is mRNA export factor ICP27 homolog (470 aa).

Disordered regions lie at residues 1–31 and 73–202; these read MALS…TGGD and FSAS…AGDR. The segment covering 73–85 has biased composition (polar residues); that stretch reads FSASPQRAQPSNP. Composition is skewed to basic residues over residues 94-107 and 178-187; these read HGRR…RRNN and RVHRNRRRGN. Zn(2+) contacts are provided by Cys359, His437, Cys441, and Cys446. Residues 359 to 446 form a CHC2-type zinc finger; sequence CYLSSSGSPT…HKRRCKADTC (88 aa).

It belongs to the HHV-1 ICP27 protein family. Homodimer. Homodimerization is required for transactivation. Associates in a complex with RNA, and host export factors NXF1/TAP and ALYREF; these interactions allow nuclear export of viral transcripts. Interacts with three host shuttling SR proteins SRSF1, SRSF3 and SRSF7. Interacts with host SRPK1. Interacts with IE62; this interaction enhances IE62 transactivation.

The protein localises to the host cytoplasm. Its subcellular location is the host nucleus. In terms of biological role, multifunctional regulator of the expression of viral genes that mediates nuclear export of viral intronless mRNAs. This immediate early (EI) protein promotes the nuclear export of viral intronless mRNAs by interacting with mRNAs and host NXF1/TAP. This Equine herpesvirus 1 (strain Kentucky A) (EHV-1) protein is mRNA export factor ICP27 homolog.